Here is a 301-residue protein sequence, read N- to C-terminus: Probable alpha-L-glutamate ligase (301 aa).

The ATP-grasp domain occupies L104–E287. Residues K141, E178–F179, D187, and R211–N213 each bind ATP. Mg(2+) is bound by residues D248, E260, and N262. Mn(2+) is bound by residues D248, E260, and N262.

The protein belongs to the RimK family. Requires Mg(2+) as cofactor. Mn(2+) serves as cofactor.

This is Probable alpha-L-glutamate ligase from Cellvibrio japonicus (strain Ueda107) (Pseudomonas fluorescens subsp. cellulosa).